A 430-amino-acid chain; its full sequence is 3-phosphoshikimate 1-carboxyvinyltransferase (430 aa).

Residues Lys-20, Ser-21, and Arg-25 each coordinate 3-phosphoshikimate. Lys-20 contributes to the phosphoenolpyruvate binding site. Residues Gly-90 and Arg-118 each coordinate phosphoenolpyruvate. Ser-163, Ser-164, Gln-165, Ser-191, Asp-311, and Lys-338 together coordinate 3-phosphoshikimate. Residue Gln-165 participates in phosphoenolpyruvate binding. Asp-311 functions as the Proton acceptor in the catalytic mechanism. The phosphoenolpyruvate site is built by Arg-342 and Arg-383.

Belongs to the EPSP synthase family. In terms of assembly, monomer.

It localises to the cytoplasm. It catalyses the reaction 3-phosphoshikimate + phosphoenolpyruvate = 5-O-(1-carboxyvinyl)-3-phosphoshikimate + phosphate. It participates in metabolic intermediate biosynthesis; chorismate biosynthesis. Functionally, catalyzes the transfer of the enolpyruvyl moiety of phosphoenolpyruvate (PEP) to the 5-hydroxyl of shikimate-3-phosphate (S3P) to produce enolpyruvyl shikimate-3-phosphate and inorganic phosphate. The polypeptide is 3-phosphoshikimate 1-carboxyvinyltransferase (Methanosarcina acetivorans (strain ATCC 35395 / DSM 2834 / JCM 12185 / C2A)).